Consider the following 659-residue polypeptide: Interferon-induced GTP-binding protein Mx2 (659 aa).

In terms of domain architecture, Dynamin-type G spans 65-338; it reads DLALPAIAVI…LISHICKSLP (274 aa). Residues 75-82 are G1 motif; it reads GDQSSGKS. 75-82 serves as a coordination point for GTP; it reads GDQSSGKS. The tract at residues 100–102 is G2 motif; sequence VTR. The G3 motif stretch occupies residues 176–179; that stretch reads DLPG. GTP contacts are provided by residues 176–180 and 245–248; these read DLPGI and TKPD. The interval 245-248 is G4 motif; sequence TKPD. Residues 277–280 form a G5 motif region; it reads KCRG. The interval 547–567 is disordered; sequence EAEEEERKHGKSRSSQSKNLQ. The GED domain occupies 571 to 659; that stretch reads MDEIFQHLNA…AQRRLAKFPG (89 aa).

The protein belongs to the TRAFAC class dynamin-like GTPase superfamily. Dynamin/Fzo/YdjA family.

The protein localises to the cytoplasm. Interferon-induced dynamin-like GTPase with antiviral activity against vesicular stomatitis virus (VSV). In Rattus norvegicus (Rat), this protein is Interferon-induced GTP-binding protein Mx2 (Mx2).